A 636-amino-acid chain; its full sequence is uncharacterized protein (636 aa).

The zn(2)-C6 fungal-type DNA-binding region spans 10–36 (CLACRRKKVKCNRQYPCTRCLKYGEAC). Residues 556–580 (NSQSTSEFVSPISDTENGSSSQQVS) are compositionally biased toward polar residues. Residues 556-581 (NSQSTSEFVSPISDTENGSSSQQVSE) form a disordered region.

Its subcellular location is the cytoplasm. It is found in the nucleus. This is an uncharacterized protein from Schizosaccharomyces pombe (strain 972 / ATCC 24843) (Fission yeast).